We begin with the raw amino-acid sequence, 231 residues long: Ion-translocating oxidoreductase complex subunit E (231 aa).

A run of 6 helical transmembrane segments spans residues 18-38 (ALVQ…ATNA), 39-59 (LGLG…ISTL), 63-83 (TPAE…VSAV), 86-106 (LINA…PLIV), 125-145 (ALSA…MFVL), and 182-202 (PFLL…MLAG).

Belongs to the NqrDE/RnfAE family. In terms of assembly, the complex is composed of six subunits: RsxA, RsxB, RsxC, RsxD, RsxE and RsxG.

The protein localises to the cell inner membrane. Part of a membrane-bound complex that couples electron transfer with translocation of ions across the membrane. Required to maintain the reduced state of SoxR. The protein is Ion-translocating oxidoreductase complex subunit E of Escherichia coli O127:H6 (strain E2348/69 / EPEC).